Reading from the N-terminus, the 600-residue chain is Autophagy-related protein 22-2 (600 aa).

Positions 1–30 (MAFASPPASPPDEDGQARAPRYPGEDTTPT) are disordered. The next 4 helical transmembrane spans lie at 41-61 (YGIAAEVFAVCGVGSFLPLTL), 117-137 (SFAMYTFSLAVLVQALTLISF), 149-168 (TLLVTFGFIGSATSMLFVFI), and 186-206 (CLGSSFVVLNSFLPVLVASDP). The tract at residues 234–257 (SFDGDEPTHRPPTGLGLGGATGTS) is disordered. Transmembrane regions (helical) follow at residues 271 to 291 (GVGLGYCAAVFVQILSILLLF), 304 to 324 (TLPLRFVLLLVGIWWFSFTMV), 378 to 398 (VIVFLVAWFLLSDAMATVSGT), and 414 to 434 (VALLSITATLSGMAGAFLWPI). An N-linked (GlcNAc...) asparagine glycan is attached at asparagine 444. 4 helical membrane passes run 449–469 (VCIALFELIPLYGMLAYIPLF), 484–506 (YPLAIVHGVVSGGLSSYCRSFFG), 526–546 (KGSSFIGPAIVGVLIDATGQV), and 549–569 (GFFFIAVLIVLPIPLVWMVDA).

This sequence belongs to the ATG22 family.

The protein localises to the vacuole membrane. Its function is as follows. Vacuolar effluxer which mediate the efflux of amino acids resulting from autophagic degradation. The release of autophagic amino acids allows the maintenance of protein synthesis and viability during nitrogen starvation. In Aspergillus niger (strain ATCC MYA-4892 / CBS 513.88 / FGSC A1513), this protein is Autophagy-related protein 22-2 (atg22-2).